We begin with the raw amino-acid sequence, 200 residues long: Imidazole glycerol phosphate synthase subunit HisH (200 aa).

One can recognise a Glutamine amidotransferase type-1 domain in the interval 3 to 200 (DVALIDAGGA…LHNFLEMSFP (198 aa)). Catalysis depends on Cys78, which acts as the Nucleophile. Active-site residues include His179 and Glu181.

Heterodimer of HisH and HisF.

It localises to the cytoplasm. It catalyses the reaction 5-[(5-phospho-1-deoxy-D-ribulos-1-ylimino)methylamino]-1-(5-phospho-beta-D-ribosyl)imidazole-4-carboxamide + L-glutamine = D-erythro-1-(imidazol-4-yl)glycerol 3-phosphate + 5-amino-1-(5-phospho-beta-D-ribosyl)imidazole-4-carboxamide + L-glutamate + H(+). It carries out the reaction L-glutamine + H2O = L-glutamate + NH4(+). The protein operates within amino-acid biosynthesis; L-histidine biosynthesis; L-histidine from 5-phospho-alpha-D-ribose 1-diphosphate: step 5/9. IGPS catalyzes the conversion of PRFAR and glutamine to IGP, AICAR and glutamate. The HisH subunit catalyzes the hydrolysis of glutamine to glutamate and ammonia as part of the synthesis of IGP and AICAR. The resulting ammonia molecule is channeled to the active site of HisF. The sequence is that of Imidazole glycerol phosphate synthase subunit HisH from Xanthomonas oryzae pv. oryzae (strain MAFF 311018).